The following is a 394-amino-acid chain: ATP phosphoribosyltransferase regulatory subunit (394 aa).

This sequence belongs to the class-II aminoacyl-tRNA synthetase family. HisZ subfamily. Heteromultimer composed of HisG and HisZ subunits.

The protein resides in the cytoplasm. Its pathway is amino-acid biosynthesis; L-histidine biosynthesis; L-histidine from 5-phospho-alpha-D-ribose 1-diphosphate: step 1/9. In terms of biological role, required for the first step of histidine biosynthesis. May allow the feedback regulation of ATP phosphoribosyltransferase activity by histidine. In Geobacillus thermodenitrificans (strain NG80-2), this protein is ATP phosphoribosyltransferase regulatory subunit.